Here is a 98-residue protein sequence, read N- to C-terminus: MARPKIPRRIECHPPASCFKPNGVPIRQLARVELAPDELEALRLVDQLGLQQQQAALQMQVSRQTLANLVKAARFKVVDCLLHQKALYIQAIDNKSSD.

It belongs to the UPF0251 family.

The polypeptide is UPF0251 protein VC0395_0048/VC395_A0084 (Vibrio cholerae serotype O1 (strain ATCC 39541 / Classical Ogawa 395 / O395)).